Reading from the N-terminus, the 426-residue chain is MDTPLRRSRRLEGLKPLSPENLPVPEVSRAKRALVDFKSNSEETGELKSTRVPPLSLPSPGPQPETSPGSPCPPLSLPSPGPQPETSPGSPCPPLSLPSPGPQPETSPGSPCPPLSLPSPGPQPETSPGSPCPPLSLPSPGPQPEASPGSPGPRQDADDGSPQRQPEPHPGSLQPHQDLGLESPAGQTESSPESPQREQPSKLPPPQGELDSEAAHAKEEVIPGSPEPCPGQQAPGPEPSQPAQELTVQAPSSPERQLEPGKLPPAGETVTESLNLKKRVIASPQAPASKKLKEKEELPVIPKGKPKSGRVWKDRSKKRFSQMVQDKPLRTSWQRKMKERQERKLAKDFARHLEEEKQRRRQEKKERRAENLRRRLENERKAEIVQVIRNPAKLKKAKKKQLRSIEKRDTLALLQKQPPQRPVAKV.

The segment at 1–426 (MDTPLRRSRR…QPPQRPVAKV (426 aa)) is disordered. Ser-18 carries the post-translational modification Phosphoserine. The span at 33–49 (ALVDFKSNSEETGELKS) shows a compositional bias: basic and acidic residues. Over residues 55-145 (LSLPSPGPQP…SLPSPGPQPE (91 aa)) the composition is skewed to pro residues. A Phosphoserine modification is found at Ser-59. A Phosphothreonine modification is found at Thr-66. Ser-67, Ser-70, Ser-161, Ser-172, Ser-183, Ser-191, Ser-194, Ser-225, Ser-252, Ser-253, and Ser-283 each carry phosphoserine. The segment covering 241 to 255 (QPAQELTVQAPSSPE) has biased composition (polar residues). The segment covering 304 to 320 (GKPKSGRVWKDRSKKRF) has biased composition (basic residues). Residues 339-383 (ERQERKLAKDFARHLEEEKQRRRQEKKERRAENLRRRLENERKAE) are compositionally biased toward basic and acidic residues. Residues 346-389 (AKDFARHLEEEKQRRRQEKKERRAENLRRRLENERKAEIVQVIR) are a coiled coil. Basic residues predominate over residues 392–402 (AKLKKAKKKQL). The residue at position 408 (Arg-408) is a Citrulline.

Post-translationally, citrullinated by PADI4. In terms of tissue distribution, highly expressed in testis. Also expressed in heart, liver, kidney.

It localises to the nucleus. The protein localises to the chromosome. It is found in the nucleolus. Its function is as follows. Required for proper chromosome segregation during mitosis and error-free mitotic progression. This chain is Coiled-coil domain-containing protein 86, found in Mus musculus (Mouse).